The following is a 356-amino-acid chain: Probable dual-specificity RNA methyltransferase RlmN (356 aa).

The Proton acceptor role is filled by Glu100. The region spanning 106-340 (TNSRLTTCVS…VSLRASRGLD (235 aa)) is the Radical SAM core domain. A disulfide bridge connects residues Cys113 and Cys345. Residues Cys120, Cys124, and Cys127 each contribute to the [4Fe-4S] cluster site. Residues 167 to 168 (GE), Ser197, 226 to 228 (SLH), and Asn302 each bind S-adenosyl-L-methionine. The S-methylcysteine intermediate role is filled by Cys345.

This sequence belongs to the radical SAM superfamily. RlmN family. It depends on [4Fe-4S] cluster as a cofactor.

It is found in the cytoplasm. The enzyme catalyses adenosine(2503) in 23S rRNA + 2 reduced [2Fe-2S]-[ferredoxin] + 2 S-adenosyl-L-methionine = 2-methyladenosine(2503) in 23S rRNA + 5'-deoxyadenosine + L-methionine + 2 oxidized [2Fe-2S]-[ferredoxin] + S-adenosyl-L-homocysteine. The catalysed reaction is adenosine(37) in tRNA + 2 reduced [2Fe-2S]-[ferredoxin] + 2 S-adenosyl-L-methionine = 2-methyladenosine(37) in tRNA + 5'-deoxyadenosine + L-methionine + 2 oxidized [2Fe-2S]-[ferredoxin] + S-adenosyl-L-homocysteine. Its function is as follows. Specifically methylates position 2 of adenine 2503 in 23S rRNA and position 2 of adenine 37 in tRNAs. This is Probable dual-specificity RNA methyltransferase RlmN from Prochlorococcus marinus (strain MIT 9211).